The sequence spans 265 residues: Transcription factor Spi-B-like (265 aa).

Positions 1 to 31 are TAD1 (Acidic); it reads MLTLEASQLDGPHPSYMFSDSSFYDLDSCKP. Residues 42–63 form a TAD2 region; the sequence is AEPPTDPCAGWLELAEPGYEPF. A disordered region spans residues 127-160; sequence TPLSEDDDFPTDAPALEVSDSDSDENLSPGGSLD. Residues 169–252 constitute a DNA-binding region (ETS); the sequence is LRLYQFLLGL…VKKKLTYQFG (84 aa).

This sequence belongs to the ETS family.

The protein localises to the nucleus. In terms of biological role, may act as a sequence specific transcriptional activator. In Paleosuchus palpebrosus (Cuvier's smooth-fronted caiman), this protein is Transcription factor Spi-B-like.